A 62-amino-acid polypeptide reads, in one-letter code: Temporin-CDYb (62 aa).

The N-terminal stretch at methionine 1 to cysteine 22 is a signal peptide. The propeptide occupies glutamate 23–glutamate 45. Leucine amide is present on leucine 60.

It belongs to the frog skin active peptide (FSAP) family. Temporin subfamily. Expressed by the skin glands.

It is found in the secreted. Antimicrobial peptide. Has low activity against the Gram-positive bacterium S.aureus (MIC&gt;100 uM) and the Gram-negative bacterium E.coli (MIC&gt;100 uM). Has weak hemolytic activity against human erythrocytes. This Rana dybowskii (Dybovsky's frog) protein is Temporin-CDYb.